The primary structure comprises 296 residues: 4-hydroxybenzoate octaprenyltransferase (296 aa).

8 consecutive transmembrane segments (helical) span residues 29-49, 55-75, 102-122, 146-166, 169-189, 219-239, 241-261, and 275-295; these read IGIY…ADGV, LLIF…INDF, AWIT…LTNA, YYPQ…AFTA, GELP…TVAY, LIIG…GNRF, LGLC…WEAW, and FLHN…DYAL.

It belongs to the UbiA prenyltransferase family. The cofactor is Mg(2+).

It localises to the cell inner membrane. It carries out the reaction all-trans-octaprenyl diphosphate + 4-hydroxybenzoate = 4-hydroxy-3-(all-trans-octaprenyl)benzoate + diphosphate. It participates in cofactor biosynthesis; ubiquinone biosynthesis. In terms of biological role, catalyzes the prenylation of para-hydroxybenzoate (PHB) with an all-trans polyprenyl group. Mediates the second step in the final reaction sequence of ubiquinone-8 (UQ-8) biosynthesis, which is the condensation of the polyisoprenoid side chain with PHB, generating the first membrane-bound Q intermediate 3-octaprenyl-4-hydroxybenzoate. The chain is 4-hydroxybenzoate octaprenyltransferase from Pseudomonas aeruginosa (strain LESB58).